Reading from the N-terminus, the 218-residue chain is Non-structural protein NS3 (218 aa).

It belongs to the orbivirus NS3 family.

May play a role in the release of virions from infected cells. This is Non-structural protein NS3 (Segment-10) from Camelus dromedarius (Dromedary).